We begin with the raw amino-acid sequence, 530 residues long: 4-alpha-glucanotransferase (530 aa).

Belongs to the disproportionating enzyme family.

It is found in the cytoplasm. The enzyme catalyses Transfers a segment of a (1-&gt;4)-alpha-D-glucan to a new position in an acceptor, which may be glucose or a (1-&gt;4)-alpha-D-glucan.. This chain is 4-alpha-glucanotransferase (malQ), found in Chlamydia caviae (strain ATCC VR-813 / DSM 19441 / 03DC25 / GPIC) (Chlamydophila caviae).